Consider the following 349-residue polypeptide: tRNA pseudouridine synthase D (349 aa).

The interval 1-22 (MTDAPLVTAELPGSGGSLRRSP) is disordered. Asp78 functions as the Nucleophile in the catalytic mechanism. Residues 150–304 (GLPNLFGPQR…AEGTRRAARL (155 aa)) enclose the TRUD domain.

This sequence belongs to the pseudouridine synthase TruD family.

It catalyses the reaction uridine(13) in tRNA = pseudouridine(13) in tRNA. Responsible for synthesis of pseudouridine from uracil-13 in transfer RNAs. This chain is tRNA pseudouridine synthase D, found in Anaeromyxobacter sp. (strain Fw109-5).